The following is a 209-amino-acid chain: N-(5'-phosphoribosyl)anthranilate isomerase (209 aa).

It belongs to the TrpF family.

It carries out the reaction N-(5-phospho-beta-D-ribosyl)anthranilate = 1-(2-carboxyphenylamino)-1-deoxy-D-ribulose 5-phosphate. It participates in amino-acid biosynthesis; L-tryptophan biosynthesis; L-tryptophan from chorismate: step 3/5. This Pelobacter propionicus (strain DSM 2379 / NBRC 103807 / OttBd1) protein is N-(5'-phosphoribosyl)anthranilate isomerase.